Consider the following 456-residue polypeptide: GTPase Der (456 aa).

EngA-type G domains follow at residues 3 to 167 (FTIA…PETE) and 185 to 360 (IRVA…AVWN). Residues 9–16 (GRPNVGKS), 56–60 (DTAGL), 119–122 (NKSE), 191–198 (GRPNAGKS), 238–242 (DTAGL), and 303–306 (NKWD) contribute to the GTP site. Positions 361-445 (RRVPTAALNR…PVRITLREKA (85 aa)) constitute a KH-like domain.

It belongs to the TRAFAC class TrmE-Era-EngA-EngB-Septin-like GTPase superfamily. EngA (Der) GTPase family. As to quaternary structure, associates with the 50S ribosomal subunit.

In terms of biological role, GTPase that plays an essential role in the late steps of ribosome biogenesis. In Bradyrhizobium sp. (strain BTAi1 / ATCC BAA-1182), this protein is GTPase Der.